We begin with the raw amino-acid sequence, 837 residues long: MLRTAMGLRSWLAAPWGALPPRPPLLLLLLLLLLLQPPPPTWALSPRISLPLGSEERPFLRFEAEHISNYTALLLSRDGRTLYVGAREALFALSSNLSFLPGGEYQELLWGADAEKKQQCSFKGKDPQRDCQNYIKILLPLSGSHLFTCGTAAFSPMCTYINMENFTLARDEKGNVLLEDGKGRCPFDPNFKSTALVVDGELYTGTVSSFQGNDPAISRSQSLRPTKTESSLNWLQDPAFVASAYIPESLGSLQGDDDKIYFFFSETGQEFEFFENTIVSRIARICKGDEGGERVLQQRWTSFLKAQLLCSRPDDGFPFNVLQDVFTLSPSPQDWRDTLFYGVFTSQWHRGTTEGSAVCVFTMKDVQRVFSGLYKEVNRETQQWYTVTHPVPTPRPGACITNSARERKINSSLQLPDRVLNFLKDHFLMDGQVRSRMLLLQPQARYQRVAVHRVPGLHHTYDVLFLGTGDGRLHKAVSVGPRVHIIEELQIFSSGQPVQNLLLDTHRGLLYAASHSGVVQVPMANCSLYRSCGDCLLARDPYCAWSGSSCKHVSLYQPQLATRPWIQDIEGASAKDLCSASSVVSPSFVPTGEKPCEQVQFQPNTVNTLACPLLSNLATRLWLRNGAPVNASASCHVLPTGDLLLVGTQQLGEFQCWSLEEGFQQLVASYCPEVVEDGVADQTDEGGSVPVIISTSRVSAPAGGKASWGADRSYWKEFLVMCTLFVLAVLLPVLFLLYRHRNSMKVFLKQGECASVHPKTCPVVLPPETRPLNGLGPPSTPLDHRGYQSLSDSPPGSRVFTESEKRPLSIQDSFVEVSPVCPRPRVRLGSEIRDSVV.

The N-terminal stretch at 1–43 is a signal peptide; sequence MLRTAMGLRSWLAAPWGALPPRPPLLLLLLLLLLLQPPPPTWA. Residues 44-717 lie on the Extracellular side of the membrane; the sequence is LSPRISLPLG…WGADRSYWKE (674 aa). The region spanning 47 to 523 is the Sema domain; sequence RISLPLGSEE…SHSGVVQVPM (477 aa). 2 N-linked (GlcNAc...) asparagine glycosylation sites follow: asparagine 69 and asparagine 96. 2 cysteine pairs are disulfide-bonded: cysteine 120–cysteine 131 and cysteine 149–cysteine 158. The N-linked (GlcNAc...) asparagine glycan is linked to asparagine 165. 2 cysteine pairs are disulfide-bonded: cysteine 286-cysteine 399 and cysteine 310-cysteine 359. N-linked (GlcNAc...) asparagine glycosylation is found at asparagine 410 and asparagine 525. The 55-residue stretch at 525–579 folds into the PSI domain; that stretch reads NCSLYRSCGDCLLARDPYCAWSGSSCKHVSLYQPQLATRPWIQDIEGASAKDLCS. Cystine bridges form between cysteine 526–cysteine 543 and cysteine 611–cysteine 656. Residues 604-663 enclose the Ig-like C2-type domain; the sequence is NTVNTLACPLLSNLATRLWLRNGAPVNASASCHVLPTGDLLLVGTQQLGEFQCWSLEEGF. N-linked (GlcNAc...) asparagine glycosylation is present at asparagine 630. A helical membrane pass occupies residues 718 to 738; sequence FLVMCTLFVLAVLLPVLFLLY. Residues 739–837 are Cytoplasmic-facing; sequence RHRNSMKVFL…LGSEIRDSVV (99 aa). A disordered region spans residues 767-805; that stretch reads PETRPLNGLGPPSTPLDHRGYQSLSDSPPGSRVFTESEK. Phosphoserine is present on residues serine 793, serine 818, and serine 830.

The protein belongs to the semaphorin family.

Its subcellular location is the membrane. Functionally, inhibits axonal extension by providing local signals to specify territories inaccessible for growing axons. This chain is Semaphorin-4B, found in Homo sapiens (Human).